Reading from the N-terminus, the 576-residue chain is Aspartate--tRNA ligase (576 aa).

Residue Glu-171 participates in L-aspartate binding. Residues 195 to 198 (QLFK) are aspartate. Arg-217 serves as a coordination point for L-aspartate. ATP is bound by residues 217-219 (RDE) and Gln-226. His-450 provides a ligand contact to L-aspartate. Residue Glu-484 coordinates ATP. Arg-491 contributes to the L-aspartate binding site. 536 to 539 (GLDR) contacts ATP.

Belongs to the class-II aminoacyl-tRNA synthetase family. Type 1 subfamily. As to quaternary structure, homodimer.

Its subcellular location is the cytoplasm. It catalyses the reaction tRNA(Asp) + L-aspartate + ATP = L-aspartyl-tRNA(Asp) + AMP + diphosphate. Its function is as follows. Catalyzes the attachment of L-aspartate to tRNA(Asp) in a two-step reaction: L-aspartate is first activated by ATP to form Asp-AMP and then transferred to the acceptor end of tRNA(Asp). This is Aspartate--tRNA ligase from Buchnera aphidicola subsp. Baizongia pistaciae (strain Bp).